We begin with the raw amino-acid sequence, 1016 residues long: MRRWFSKLGSTSLASTSRVTAFSSSESAAVEQLADSSIPPPITPFIIAKPDIHWNVDFASDPCSWESCFDAHWEAAEKLLENEEEISYEKVITVFQHLNCTVQLLMMEANAQPESAIGSILDRHFTHQIMERVVDWAIAAPHFLTPTCQVNMIGLYEVIVGESHTQNHCLLVHKPMLLPLLKLLDWCRKSAEKRNFTPSNTDRHFVLLLNQICTKLAEDTTLLHFFFDFDDDCDEQFLVFSLLIPYLYDSGEVGQLARDALLLILSVSRRLKRVATFIAVKSNFCPVVATGLSGCFSQLSRSFGSMLYVSDSWHKINADDIDSYSSLLDFHSSLIFCNAVIQVAHGYVVSQVIRYVYHGFLLPVVLPSLLQGGQDELISSTAYYHLCLDSVTETVLVQTIVKLLLNESCESNKTVLDVIVERISAGNRLSQVSLSLVRTLIDLRCEDIMFDLVFKYLLPCTFLQPNQTLHLKNQMYVRTAAQTLLTFVPECTYKSSALCSQETLHIYLSECRNYVQETTDACCEKWVWSYDGRSPFFMPKINSDEESATNSNGAFVRHSSVRSSMASARNGLNRYFVSRNAHITADSLRQHTPPPELGEQESSSRSSFPYDIADSSLVLDDEGDELIIPALTPTSLMMMTSSSDYFQFAYGELSETDTEAINPSVVSMSGAPAQSISDKASLASTSANCDTDIEMARSFVLRGWGQIEDTDTFMALMDRVPASKIKHSLEENMALIDSRIQYLEELKAEAKLQDLESDGFKSDTNNDNDDEDPAPLGKPIECFGNQGVGPFLESIMRSLENMLDNSLYVTLQTTSVLAALASYPQPLIAHYLFDQRMLLQPNVKNLFKVMDSLKTQIDAYASSLDGFDVLLERGIKFLRSRAERYEKVVESSRRLRSSESFSRNGNMEGRSSSRGLFNRFRSSNNKRLYPSNDSSHPHEFRIYTHKAIESRDVTLDHARAKQFVFAAIILSQFCQELAATVLQHSTVVPRPKVSPAKDYLRREVNSAGKDANCCAD.

Disordered stretches follow at residues aspartate 586–phenylalanine 608 and serine 757–lysine 778.

Belongs to the FHIP family.

The polypeptide is FHIP family protein Bm1_18400 (Brugia malayi (Filarial nematode worm)).